Consider the following 262-residue polypeptide: MIDKTAFVHPTAIVEEGAVIGANVHIGPFCIVGANVEIGEGTVLKSHVVVNGHTKIGRDNEIYQFASIGEVNQDLKYAGEPTRVEIGDRNRIRESVTIHRGTVQGGGLTKVGNDNLLMINAHVAHDCTLGDRCILANNATLAGHVSLDDFVIIGGMTAVHQFCIIGAHVMVGGCSGVAQDVPPFVIAQGNHATPFGVNIEGLKRRGFSREAITAIRNAYKLLYRSGKTLDEAKPEIAELATQHPEVQPFVDFFARSTRGLIR.

Belongs to the transferase hexapeptide repeat family. LpxA subfamily. As to quaternary structure, homotrimer.

It is found in the cytoplasm. It catalyses the reaction a (3R)-hydroxyacyl-[ACP] + UDP-N-acetyl-alpha-D-glucosamine = a UDP-3-O-[(3R)-3-hydroxyacyl]-N-acetyl-alpha-D-glucosamine + holo-[ACP]. It participates in glycolipid biosynthesis; lipid IV(A) biosynthesis; lipid IV(A) from (3R)-3-hydroxytetradecanoyl-[acyl-carrier-protein] and UDP-N-acetyl-alpha-D-glucosamine: step 1/6. Its function is as follows. Involved in the biosynthesis of lipid A, a phosphorylated glycolipid that anchors the lipopolysaccharide to the outer membrane of the cell. This is Acyl-[acyl-carrier-protein]--UDP-N-acetylglucosamine O-acyltransferase from Klebsiella pneumoniae (strain 342).